Reading from the N-terminus, the 473-residue chain is Xylan O-acetyltransferase 14 (473 aa).

Residues 1–17 (MTTTGSTPPRKNRSNVT) show a composition bias toward polar residues. Positions 1–22 (MTTTGSTPPRKNRSNVTGGEGG) are disordered. Residues 1–54 (MTTTGSTPPRKNRSNVTGGEGGSLEEYAWRAAGEAAAAKKATRAWGVSVSLRSH) lie on the Cytoplasmic side of the membrane. Residues 55 to 75 (FSSLVLLLLLLLVALAVSATT) form a helical; Signal-anchor for type II membrane protein membrane-spanning segment. Positions 76 to 101 (KNGDPAETPHAPPLPPPASIKLPSSS) are disordered. The Lumenal segment spans residues 76–473 (KNGDPAETPH…NQLLYAHIVS (398 aa)). Disulfide bonds link cysteine 108–cysteine 159, cysteine 130–cysteine 195, cysteine 139–cysteine 455, and cysteine 370–cysteine 451. The short motif at 182-184 (GDS) is the GDS motif element. The active-site Nucleophile is the serine 184. N-linked (GlcNAc...) asparagine glycans are attached at residues asparagine 209, asparagine 223, and asparagine 414. The active-site Proton donor is aspartate 450. Residues 450 to 453 (DCIH) carry the DXXH motif motif. Residue histidine 453 is the Proton acceptor of the active site.

The protein belongs to the PC-esterase family. TBL subfamily.

The protein resides in the golgi apparatus membrane. Xylan acetyltransferase required for 2-O- and 3-O-monoacetylation of xylosyl residues in xylan. Catalyzes the 2-O-acetylation of xylan, followed by nonenzymatic acetyl migration to the O-3 position, resulting in products that are monoacetylated at both O-2 and O-3 positions. This Oryza sativa subsp. japonica (Rice) protein is Xylan O-acetyltransferase 14.